The sequence spans 97 residues: DNA/RNA-binding protein Alba (97 aa).

An N6-acetyllysine modification is found at Lys15.

The protein belongs to the histone-like Alba family. In terms of processing, acetylated. Acetylation at Lys-15 decreases DNA-binding affinity.

It localises to the cytoplasm. The protein resides in the chromosome. In terms of biological role, binds double-stranded DNA tightly but without sequence specificity. Involved in DNA compaction. The protein is DNA/RNA-binding protein Alba of Sulfolobus acidocaldarius (strain ATCC 33909 / DSM 639 / JCM 8929 / NBRC 15157 / NCIMB 11770).